The primary structure comprises 313 residues: Glutathione synthetase (313 aa).

Positions 125–309 constitute an ATP-grasp domain; it reads KLFVMDFTEL…IAAKIWDVIE (185 aa). 151–207 provides a ligand contact to ATP; the sequence is RAEHGAVVMKPLHGHGGAAVFRVLPQDINFGSLYDMFAVTFREPWVIQRFLPEVKHG. Mg(2+) is bound by residues Glu-280 and Asn-282.

Belongs to the prokaryotic GSH synthase family. Mg(2+) serves as cofactor. Mn(2+) is required as a cofactor.

The enzyme catalyses gamma-L-glutamyl-L-cysteine + glycine + ATP = glutathione + ADP + phosphate + H(+). The protein operates within sulfur metabolism; glutathione biosynthesis; glutathione from L-cysteine and L-glutamate: step 2/2. This chain is Glutathione synthetase, found in Rhodopseudomonas palustris (strain ATCC BAA-98 / CGA009).